Reading from the N-terminus, the 130-residue chain is MSMQDPISDMLTRVRNGQAANKVAVKMPSSKLKVAIAALLKAEGYIVDFAVDSEAKPELEVTLKYFQAKPVIEQIKRVSRPGLRVYKNKDSLPTVMGGLGIAVVSTSKGLMSDRAARKAGLGGEIICYVA.

The protein belongs to the universal ribosomal protein uS8 family. Part of the 30S ribosomal subunit. Contacts proteins S5 and S12.

Its function is as follows. One of the primary rRNA binding proteins, it binds directly to 16S rRNA central domain where it helps coordinate assembly of the platform of the 30S subunit. This is Small ribosomal subunit protein uS8 from Vibrio atlanticus (strain LGP32) (Vibrio splendidus (strain Mel32)).